Reading from the N-terminus, the 406-residue chain is Argininosuccinate synthase (406 aa).

ATP contacts are provided by residues 13–21 (AYSGGLDTS) and Ala-40. L-citrulline-binding residues include Tyr-91 and Ser-96. Gly-121 contributes to the ATP binding site. Positions 123, 127, and 128 each coordinate L-aspartate. Position 127 (Asn-127) interacts with L-citrulline. L-citrulline contacts are provided by Arg-131, Ser-182, Ser-191, Glu-267, and Tyr-279.

Belongs to the argininosuccinate synthase family. Type 1 subfamily. Homotetramer.

The protein localises to the cytoplasm. It catalyses the reaction L-citrulline + L-aspartate + ATP = 2-(N(omega)-L-arginino)succinate + AMP + diphosphate + H(+). It functions in the pathway amino-acid biosynthesis; L-arginine biosynthesis; L-arginine from L-ornithine and carbamoyl phosphate: step 2/3. The chain is Argininosuccinate synthase from Brucella suis biovar 1 (strain 1330).